A 702-amino-acid polypeptide reads, in one-letter code: Elongation factor G (702 aa).

The region spanning 8–286 (DKVRNIGIIA…AVVEYLPSPL (279 aa)) is the tr-type G domain. Residues 17-24 (AHIDAGKT), 85-89 (DTPGH), and 139-142 (NKMD) each bind GTP.

It belongs to the TRAFAC class translation factor GTPase superfamily. Classic translation factor GTPase family. EF-G/EF-2 subfamily.

The protein localises to the cytoplasm. Catalyzes the GTP-dependent ribosomal translocation step during translation elongation. During this step, the ribosome changes from the pre-translocational (PRE) to the post-translocational (POST) state as the newly formed A-site-bound peptidyl-tRNA and P-site-bound deacylated tRNA move to the P and E sites, respectively. Catalyzes the coordinated movement of the two tRNA molecules, the mRNA and conformational changes in the ribosome. The polypeptide is Elongation factor G (Chloroflexus aggregans (strain MD-66 / DSM 9485)).